The chain runs to 621 residues: MYDIIVAGAGHAGCEAVLAAARTGMSCLLITSDLSAIARMSCNPAIGGVAKGQITREIDALGGEMAKAIDETGIQFRMLNKSKGAAMHSPRAQADRALYSVYMRKIIEEQDNIDLVQDTVTGLDVESGAVRGAILPSGRIIKGKSVILCCGTFLNGLIHIGMNHFPGGRTIAEPPVSGLTENLQSLGFRAGRLKTGTPPRIDSRSVNYSLVEEQSGDPDPRPFSFHTDSLGHRAQVSCFVTKTKETTHELLRTGFSRSPLFSGKVQGVGPRYCPSVEDKIFRFPDKNSHHIFLEPEGAETNEMYVNGFSTSLPEDIQLLALRSIPGLEHVKMIRPGYAIEYDFFFPYQIKNTLETKIIENLYFAGQINGTSGYEEAAAQGLMAGINASLKIQNRKPFVLDRSQAYIGVLIDDLVTKDIIEPYRMFTSSAEHRISLRHDNADIRLCRMGHEAGTVDFSSFTKTEYKISAIRQLRQLCDTMKLHPDQIISAMAGAAQQPPLQPIAISNLLKRPEIDFENLLVLSEDFRAGVNEITTDPDVFEQVVIDLKYEGYLKRDLLMTEKIARLESHSIPGSFSYATVSGLSNEGREKLTLHKPETIGQASRIPGVSPSDISVLLIKIGR.

8–13 (GAGHAG) provides a ligand contact to FAD. Residue 269-283 (GPRYCPSVEDKIFRF) participates in NAD(+) binding.

It belongs to the MnmG family. In terms of assembly, homodimer. Heterotetramer of two MnmE and two MnmG subunits. Requires FAD as cofactor.

It is found in the cytoplasm. NAD-binding protein involved in the addition of a carboxymethylaminomethyl (cmnm) group at the wobble position (U34) of certain tRNAs, forming tRNA-cmnm(5)s(2)U34. The protein is tRNA uridine 5-carboxymethylaminomethyl modification enzyme MnmG of Chlorobium phaeobacteroides (strain DSM 266 / SMG 266 / 2430).